The primary structure comprises 142 residues: FAD synthase (142 aa).

ATP-binding positions include 9 to 10 (TF), 14 to 17 (HPGH), and aspartate 92.

It belongs to the archaeal FAD synthase family. Homodimer. A divalent metal cation is required as a cofactor.

It carries out the reaction FMN + ATP + H(+) = FAD + diphosphate. It participates in cofactor biosynthesis; FAD biosynthesis; FAD from FMN: step 1/1. In terms of biological role, catalyzes the transfer of the AMP portion of ATP to flavin mononucleotide (FMN) to produce flavin adenine dinucleotide (FAD) coenzyme. The polypeptide is FAD synthase (Methanohalophilus mahii (strain ATCC 35705 / DSM 5219 / SLP)).